A 586-amino-acid polypeptide reads, in one-letter code: YTH domain-containing family protein 2 (586 aa).

3 disordered regions span residues 98 to 128 (LKEK…QPVQ), 141 to 181 (SQDQ…KESP), and 301 to 464 (QGLA…PLVS). Composition is skewed to polar residues over residues 107-128 (ALRQ…QPVQ), 169-181 (TLPT…KESP), and 352-368 (SSQA…TDIQ). Residues 398 to 418 (CARRHRSSSPRGRSGSHKSRR) show a composition bias toward basic residues. The segment covering 421 to 436 (TDSPVSRSTTKSTPSR) has biased composition (polar residues). Positions 435-576 (SRARQPGHRD…YCGRDLLRLM (142 aa)) constitute a YTH domain. The segment covering 441–458 (GHRDYREYRDDRNRDTKP) has biased composition (basic and acidic residues).

Belongs to the YTHDF family. YTHDF1 subfamily.

Its function is as follows. Specifically recognizes and binds N6-methyladenosine (m6A)-containing mRNAs, and regulates their stability. M6A is a modification present at internal sites of mRNAs and some non-coding RNAs and plays a role in mRNA stability and processing. Plays a role in pathogenicity towards plant host. The protein is YTH domain-containing family protein 2 of Pyricularia oryzae (strain 70-15 / ATCC MYA-4617 / FGSC 8958) (Rice blast fungus).